The following is a 141-amino-acid chain: Large ribosomal subunit protein uL11 (141 aa).

The protein belongs to the universal ribosomal protein uL11 family. As to quaternary structure, part of the ribosomal stalk of the 50S ribosomal subunit. Interacts with L10 and the large rRNA to form the base of the stalk. L10 forms an elongated spine to which L12 dimers bind in a sequential fashion forming a multimeric L10(L12)X complex. One or more lysine residues are methylated.

Its function is as follows. Forms part of the ribosomal stalk which helps the ribosome interact with GTP-bound translation factors. The polypeptide is Large ribosomal subunit protein uL11 (Thermosipho africanus (strain TCF52B)).